The primary structure comprises 123 residues: MPPKVSGKAAKKAGKAQKNITKGDKKKNRKRKESYAIYIYKVLKQVHPDTGISSKAMSIMNSFVNDIFERIASEASRLAHYNKRSTITSREIQTAVRLLLPGELAKHAVSEGTKAVTKYTSSK.

A disordered region spans residues 1-30 (MPPKVSGKAAKKAGKAQKNITKGDKKKNRK). O-linked (GlcNAc) serine glycosylation is present at Ser-110. Residue Lys-118 forms a Glycyl lysine isopeptide (Lys-Gly) (interchain with G-Cter in ubiquitin) linkage.

It belongs to the histone H2B family. As to quaternary structure, the nucleosome is a histone octamer containing two molecules each of H2A, H2B, H3 and H4 assembled in one H3-H4 heterotetramer and two H2A-H2B heterodimers. The octamer wraps approximately 147 bp of DNA. Monoubiquitination of Lys-118 gives a specific tag for epigenetic transcriptional activation and is also prerequisite for histone H3 'Lys-4' and 'Lys-79' methylation. Post-translationally, glcNAcylation at Ser-110 promotes monoubiquitination of Lys-118. It fluctuates in response to extracellular glucose, and associates with transcribed genes.

The protein resides in the nucleus. Its subcellular location is the chromosome. Its function is as follows. Core component of nucleosome. Nucleosomes wrap and compact DNA into chromatin, limiting DNA accessibility to the cellular machineries which require DNA as a template. Histones thereby play a central role in transcription regulation, DNA repair, DNA replication and chromosomal stability. DNA accessibility is regulated via a complex set of post-translational modifications of histones, also called histone code, and nucleosome remodeling. The protein is Histone H2B.1/H2B.2 of Tigriopus californicus (Marine copepod).